Consider the following 351-residue polypeptide: Anthranilate phosphoribosyltransferase (351 aa).

5-phospho-alpha-D-ribose 1-diphosphate is bound by residues Gly84, 87–88, 95–98, 113–121, and Ala125; these read GD, NISS, and KHGNRGASS. Gly84 serves as a coordination point for anthranilate. Ser97 serves as a coordination point for Mg(2+). Asn116 is a binding site for anthranilate. Arg171 is an anthranilate binding site. The Mg(2+) site is built by Asp229 and Lys230.

The protein belongs to the anthranilate phosphoribosyltransferase family. As to quaternary structure, homodimer. Requires Mg(2+) as cofactor.

The enzyme catalyses N-(5-phospho-beta-D-ribosyl)anthranilate + diphosphate = 5-phospho-alpha-D-ribose 1-diphosphate + anthranilate. Its pathway is amino-acid biosynthesis; L-tryptophan biosynthesis; L-tryptophan from chorismate: step 2/5. Functionally, catalyzes the transfer of the phosphoribosyl group of 5-phosphorylribose-1-pyrophosphate (PRPP) to anthranilate to yield N-(5'-phosphoribosyl)-anthranilate (PRA). The polypeptide is Anthranilate phosphoribosyltransferase (Clavibacter sepedonicus (Clavibacter michiganensis subsp. sepedonicus)).